We begin with the raw amino-acid sequence, 631 residues long: Occlusion-derived virus envelope protein E66 (631 aa).

It belongs to the baculoviridae E66 family.

It is found in the virion membrane. In terms of biological role, component of the polyhedra envelope. This Leucania separata nucleopolyhedrovirus (LsNPV) protein is Occlusion-derived virus envelope protein E66.